A 289-amino-acid chain; its full sequence is Geranylgeranyl diphosphate synthase (289 aa).

2 residues coordinate isopentenyl diphosphate: Arg-43 and His-73. Mg(2+) contacts are provided by Asp-80 and Asp-86. (2E,6E)-farnesyl diphosphate is bound at residue Arg-91. Residue Arg-92 participates in isopentenyl diphosphate binding. Positions 170, 171, and 205 each coordinate (2E,6E)-farnesyl diphosphate.

This sequence belongs to the FPP/GGPP synthase family. Requires Mg(2+) as cofactor.

The enzyme catalyses isopentenyl diphosphate + (2E,6E)-farnesyl diphosphate = (2E,6E,10E)-geranylgeranyl diphosphate + diphosphate. It functions in the pathway isoprenoid biosynthesis; geranylgeranyl diphosphate biosynthesis; geranylgeranyl diphosphate from farnesyl diphosphate and isopentenyl diphosphate: step 1/1. Catalyzes the condensation of farnesyl diphosphate (FPP) and isopentenyl diphosphate (IPP) to yield geranylgeranyl diphosphate (GGPP) needed for biosynthesis of carotenoids and diterpenes. This chain is Geranylgeranyl diphosphate synthase (crtE), found in Rhodobacter capsulatus (strain ATCC BAA-309 / NBRC 16581 / SB1003).